The chain runs to 90 residues: uncharacterized protein (90 aa).

This is an uncharacterized protein from Rickettsia prowazekii (strain Madrid E).